Reading from the N-terminus, the 417-residue chain is Blood group Rh(D) polypeptide (417 aa).

Helical transmembrane passes span 12–32 (CLPLWALTLEAALILLFYFFT), 44–64 (LVASYQVGQDLTVMAAIGLGF), 77–97 (VAFNLFMLALGVQWAILLDGF), 107–127 (VITLFSIRLATMSALSVLISV), 130–150 (VLGKVNLAQLVVMVLVEVTAL), 167–187 (MNMMHIYVFAAYFGLSVAWCL), 203–223 (TIPSLSAMLGALFLWMFWPSF), 238–258 (VFNTYYAVAVSVVTAISGSSL), 287–307 (LIPSPWLAMVLGLVAGLISVG), 334–354 (LLGLLGEIIYIVLLVLDTVGA), and 358–378 (MIGFQVLLSIGELSLAIVIAL).

This sequence belongs to the ammonium transporter (TC 2.A.49) family. Rh subfamily. Post-translationally, palmitoylated. As to expression, restricted to tissues or cell lines expressing erythroid characters.

It is found in the cell membrane. Functionally, may be part of an oligomeric complex which is likely to have a transport or channel function in the erythrocyte membrane. The sequence is that of Blood group Rh(D) polypeptide (RHD) from Homo sapiens (Human).